The following is a 203-amino-acid chain: Small ribosomal subunit protein uS4 (203 aa).

In terms of domain architecture, S4 RNA-binding spans 92-152 (LRLATVLLRA…EKSRKLVPFI (61 aa)).

It belongs to the universal ribosomal protein uS4 family. As to quaternary structure, part of the 30S ribosomal subunit. Contacts protein S5. The interaction surface between S4 and S5 is involved in control of translational fidelity.

One of the primary rRNA binding proteins, it binds directly to 16S rRNA where it nucleates assembly of the body of the 30S subunit. Functionally, with S5 and S12 plays an important role in translational accuracy. The chain is Small ribosomal subunit protein uS4 from Thermobifida fusca (strain YX).